A 387-amino-acid chain; its full sequence is Probable NADH-dependent butanol dehydrogenase 1 (387 aa).

This sequence belongs to the iron-containing alcohol dehydrogenase family.

It participates in alcohol metabolism; butanol biosynthesis. This is Probable NADH-dependent butanol dehydrogenase 1 (yugJ) from Bacillus subtilis (strain 168).